The chain runs to 203 residues: GTP-binding protein rho4 (203 aa).

21 to 28 is a binding site for GTP; the sequence is GDGGCGKT. Positions 43–51 match the Effector region motif; it reads YVPTVFENY. 70–74 lines the GTP pocket; sequence DTAGQ. At Cys-200 the chain carries Cysteine methyl ester. The S-geranylgeranyl cysteine moiety is linked to residue Cys-200. The propeptide at 201–203 is removed in mature form; it reads VIL.

Belongs to the small GTPase superfamily. Rho family.

Its subcellular location is the membrane. Required for cell separation. Involved in the regulation of the septum degradation during cytokinesis and in the organization of F-actin patches and cytoplasmic microtubules. This is GTP-binding protein rho4 (rho4) from Schizosaccharomyces pombe (strain 972 / ATCC 24843) (Fission yeast).